The following is a 253-amino-acid chain: Ubiquinone/menaquinone biosynthesis C-methyltransferase UbiE (253 aa).

S-adenosyl-L-methionine contacts are provided by residues T76, D97, and 125–126; that span reads NA.

The protein belongs to the class I-like SAM-binding methyltransferase superfamily. MenG/UbiE family.

It catalyses the reaction a 2-demethylmenaquinol + S-adenosyl-L-methionine = a menaquinol + S-adenosyl-L-homocysteine + H(+). It carries out the reaction a 2-methoxy-6-(all-trans-polyprenyl)benzene-1,4-diol + S-adenosyl-L-methionine = a 5-methoxy-2-methyl-3-(all-trans-polyprenyl)benzene-1,4-diol + S-adenosyl-L-homocysteine + H(+). The protein operates within quinol/quinone metabolism; menaquinone biosynthesis; menaquinol from 1,4-dihydroxy-2-naphthoate: step 2/2. Its pathway is cofactor biosynthesis; ubiquinone biosynthesis. Methyltransferase required for the conversion of demethylmenaquinol (DMKH2) to menaquinol (MKH2) and the conversion of 2-polyprenyl-6-methoxy-1,4-benzoquinol (DDMQH2) to 2-polyprenyl-3-methyl-6-methoxy-1,4-benzoquinol (DMQH2). The chain is Ubiquinone/menaquinone biosynthesis C-methyltransferase UbiE from Rhodopseudomonas palustris (strain BisB5).